The chain runs to 159 residues: Small ribosomal subunit protein uS7 (159 aa).

The protein belongs to the universal ribosomal protein uS7 family. Part of the 30S ribosomal subunit. Contacts proteins S9 and S11.

In terms of biological role, one of the primary rRNA binding proteins, it binds directly to 16S rRNA where it nucleates assembly of the head domain of the 30S subunit. Is located at the subunit interface close to the decoding center, probably blocks exit of the E-site tRNA. In Endomicrobium trichonymphae, this protein is Small ribosomal subunit protein uS7.